Consider the following 308-residue polypeptide: CASP-like protein 4A2 (308 aa).

The disordered stretch occupies residues 1 to 135; sequence MALEAQPSPS…APAPAPRVPA (135 aa). Residues 1–161 lie on the Cytoplasmic side of the membrane; that stretch reads MALEAQPSPS…KRPTAVLQRT (161 aa). Positions 22-31 are enriched in gly residues; sequence GGAGAPGGSA. Positions 32–44 are enriched in low complexity; the sequence is GDADAQARRATSG. Pro residues-rich tracts occupy residues 54 to 65 and 89 to 132; these read RRSPPPPFPRTP and FQPP…PAPR. A helical membrane pass occupies residues 162–182; sequence ALVARVAAALLCLAALAVLAA. Residues 183–203 are Extracellular-facing; sequence DSRKGFALDSYSNYSQLRYSE. A glycan (N-linked (GlcNAc...) asparagine) is linked at Asn-195. A helical membrane pass occupies residues 204-224; that stretch reads AVNVIGFVYSVLQFFVLADLM. The Cytoplasmic portion of the chain corresponds to 225–240; it reads RRNKHLNPRRKGDYFD. Residues 241-262 form a helical membrane-spanning segment; sequence FFMDQVLAYLLISSSSSATARV. Residues 263-280 lie on the Extracellular side of the membrane; sequence GDWIDNWGSDPFPKMANS. Residue Asn-279 is glycosylated (N-linked (GlcNAc...) asparagine). Residues 281–301 traverse the membrane as a helical segment; it reads SIAISFMAFLVFAISALISAY. At 302–308 the chain is on the cytoplasmic side; sequence NLFRRDI.

The protein belongs to the Casparian strip membrane proteins (CASP) family. In terms of assembly, homodimer and heterodimers.

It is found in the cell membrane. The chain is CASP-like protein 4A2 from Oryza sativa subsp. japonica (Rice).